The following is a 107-amino-acid chain: Urease subunit beta (107 aa).

Belongs to the urease beta subunit family. In terms of assembly, heterotrimer of UreA (gamma), UreB (beta) and UreC (alpha) subunits. Three heterotrimers associate to form the active enzyme.

Its subcellular location is the cytoplasm. The catalysed reaction is urea + 2 H2O + H(+) = hydrogencarbonate + 2 NH4(+). Its pathway is nitrogen metabolism; urea degradation; CO(2) and NH(3) from urea (urease route): step 1/1. The protein is Urease subunit beta of Escherichia coli.